The following is a 201-amino-acid chain: Anthranilate synthase component 2 (201 aa).

The 200-residue stretch at 2–201 (KVLILDNYDS…KCLLRNFINS (200 aa)) folds into the Glutamine amidotransferase type-1 domain. 59 to 61 (GPG) is an L-glutamine binding site. The active-site Nucleophile; for GATase activity is the Cys-89. Residues Gln-93 and 139-140 (SL) each bind L-glutamine. Active-site for GATase activity residues include His-182 and Glu-184.

As to quaternary structure, heterotetramer consisting of two non-identical subunits: a beta subunit (TrpG) and a large alpha subunit (TrpE).

It carries out the reaction chorismate + L-glutamine = anthranilate + pyruvate + L-glutamate + H(+). It functions in the pathway amino-acid biosynthesis; L-tryptophan biosynthesis; L-tryptophan from chorismate: step 1/5. Functionally, part of a heterotetrameric complex that catalyzes the two-step biosynthesis of anthranilate, an intermediate in the biosynthesis of L-tryptophan. In the first step, the glutamine-binding beta subunit (TrpG) of anthranilate synthase (AS) provides the glutamine amidotransferase activity which generates ammonia as a substrate that, along with chorismate, is used in the second step, catalyzed by the large alpha subunit of AS (TrpE) to produce anthranilate. In the absence of TrpG, TrpE can synthesize anthranilate directly from chorismate and high concentrations of ammonia. The sequence is that of Anthranilate synthase component 2 (trpG) from Leptospira biflexa.